A 198-amino-acid chain; its full sequence is MFGFFCSLVSSLSRWFLWRRLLLLLLLLLLNLPLQVKFAMLELHSFKCPAGEYWSKDVCCKNCSAGTFVKAPCEIPHTQGQCEKCHPGTFTEKDNYLDACILCSTCDKDQEMVADCSATSDRKCQCRTGLYYYDPKFPESCRPCTKCPQGIPVLQECNSTANTVCSSSVSNPRNRLFLLLSPLSVLIVSVVVFRIIRR.

The Cytoplasmic segment spans residues methionine 1–arginine 20. Residues leucine 21–leucine 41 traverse the membrane as a helical; Signal-anchor for type II membrane protein segment. Residues glutamate 42–arginine 198 are Extracellular-facing. TNFR-Cys repeat units lie at residues lysine 47–cysteine 82, lysine 84–cysteine 124, and glutamine 125–cysteine 165. 9 cysteine pairs are disulfide-bonded: cysteine 48/cysteine 59, cysteine 60/cysteine 73, cysteine 63/cysteine 82, cysteine 85/cysteine 100, cysteine 103/cysteine 116, cysteine 106/cysteine 124, cysteine 126/cysteine 141, cysteine 144/cysteine 157, and cysteine 147/cysteine 165. Asparagine 62 carries N-linked (GlcNAc...) asparagine glycosylation. Asparagine 158 carries an N-linked (GlcNAc...) asparagine glycan.

In terms of tissue distribution, ubiquitous.

Its subcellular location is the cell membrane. The protein localises to the secreted. Receptor for the cytotoxic ligand TNFSF10/TRAIL. Lacks a cytoplasmic death domain and hence is not capable of inducing apoptosis. Protects cells against TRAIL mediated apoptosis possibly through ligand competition. Cannot induce the NF-kappa-B pathway. The protein is Tumor necrosis factor receptor superfamily member 22 (Tnfrsf22) of Mus musculus (Mouse).